Consider the following 151-residue polypeptide: Deazaflavin-dependent nitroreductase (151 aa).

Residues 54–56 (RKT), 60–65 (RVNPLY), 76–79 (AASK), 87–91 (MWYLN), and Tyr133 each bind coenzyme F420-(gamma-Glu)n.

It belongs to the F420H(2)-dependent quinone reductase family.

It is found in the cell membrane. It carries out the reaction oxidized coenzyme F420-(gamma-L-Glu)(n) + a quinol + H(+) = reduced coenzyme F420-(gamma-L-Glu)(n) + a quinone. Involved in a F420-dependent anti-oxidant mechanism that protects M.tuberculosis against oxidative stress and bactericidal agents. Catalyzes the F420H(2)-dependent two-electron reduction of quinones to dihydroquinones, thereby preventing the formation of cytotoxic semiquinones obtained by the one-electron reduction pathway. In vitro, catalyzes the reduction of both benzoquinone and naphthoquinone analogs; since menaquinone is the sole quinone electron carrier in the respiratory chain in M.tuberculosis, the physiological electron acceptor for Fqr-mediated F420H(2) oxidation is therefore likely to be the endogenous menaquinone found in the membrane fraction of M.tuberculosis. Is able to use F420 species with two and five glutamate residues in its polyglutamate tail. Cannot use NADH or NADPH instead of F420H(2) as the electron donor. In terms of biological role, is involved in the bioreductive activation of bicyclic 4-nitroimidazole prodrugs such as PA-824 and delamanid developed for anti-tuberculosis therapy against both replicating and persistent bacteria. It converts PA-824 into three primary metabolites resulting from reduction of the imidazole ring at C-3; the major one is the corresponding des-nitroimidazole that generates lethal reactive nitrogen species, including nitric oxide (NO), which appears to be responsible for the anaerobic killing activity. Ddn uses the reduced F420 produced by FGD1 to activate PA-824. Delamanid (OPC-67683) is also reduced by Ddn to its des-nitro form. This Mycobacterium tuberculosis (strain CDC 1551 / Oshkosh) protein is Deazaflavin-dependent nitroreductase (ddn).